Consider the following 138-residue polypeptide: Putative pre-16S rRNA nuclease (138 aa).

This sequence belongs to the YqgF nuclease family.

It is found in the cytoplasm. In terms of biological role, could be a nuclease involved in processing of the 5'-end of pre-16S rRNA. This chain is Putative pre-16S rRNA nuclease, found in Citrobacter koseri (strain ATCC BAA-895 / CDC 4225-83 / SGSC4696).